A 410-amino-acid polypeptide reads, in one-letter code: Sporulation killing factor maturation protein SkfB (410 aa).

Residues 103–314 (SYLPISCTLQ…LREARHKWGD (212 aa)) form the Radical SAM core domain. The [4Fe-4S] cluster site is built by cysteine 117, cysteine 121, cysteine 124, cysteine 380, cysteine 385, and cysteine 387.

This sequence belongs to the radical SAM superfamily. It depends on [4Fe-4S] cluster as a cofactor.

It localises to the cytoplasm. Functionally, catalyzes the formation of the thioether bond required for production of the sporulation killing factor (SKF) from SkfA. Forms the cysteine-methionine thioether bond found in SKF; the acceptor amino acid can be hydrophobic, aromatic or a small hydrophilic amino acid but not a larger hydrophilic amino acid, i.e. Met=Ala, Phe, Leu, Tyr&gt;Asn, Ser&gt;&gt;Gln, Glu, Lys. The relative position of Cys and Met in the substrate cannot be inverted, in vitro the thioether bond cannot be made in the absence of the SkfA propeptide, suggesting this is the first reaction in SKF maturation. In vitro, in the absence of a second substrate, cleaves S-adenosyl-L-methionine into Met and 5'-dA. The chain is Sporulation killing factor maturation protein SkfB from Bacillus subtilis (strain 168).